A 309-amino-acid chain; its full sequence is MKQKLLVIGGPTAVGKTDLSIKLAKNLNGEIISADSMQIYKYMDIGSAKVTKDEMNGIKHYLIDAIEPDTPFSVADFKQLGEEALEKIICNGKFPIISGGTGLYINSLTCNMTFTEAEKDESYREYLETLALEKGNEYIHEMLKDVDPISYKEIHANNRKRVIRALEVFKLTNKPFSSYNVGLDFYNSEYDVYYYVLTMNREKLYDRINKRVDLMMEKGLLNECIRLKEMGYNSDIQSMQGIGYKEILYYLEGKITLEKAIDMIKQGSRNYAKRQLTWFRRDKRCIFLDKDIMSDDEILDKVINDIIKN.

10 to 17 (GPTAVGKT) is a binding site for ATP. Position 12 to 17 (12 to 17 (TAVGKT)) interacts with substrate. An interaction with substrate tRNA region spans residues 35 to 38 (DSMQ).

The protein belongs to the IPP transferase family. As to quaternary structure, monomer. Mg(2+) is required as a cofactor.

It catalyses the reaction adenosine(37) in tRNA + dimethylallyl diphosphate = N(6)-dimethylallyladenosine(37) in tRNA + diphosphate. Its function is as follows. Catalyzes the transfer of a dimethylallyl group onto the adenine at position 37 in tRNAs that read codons beginning with uridine, leading to the formation of N6-(dimethylallyl)adenosine (i(6)A). In Clostridium beijerinckii (strain ATCC 51743 / NCIMB 8052) (Clostridium acetobutylicum), this protein is tRNA dimethylallyltransferase.